The chain runs to 204 residues: Small ribosomal subunit protein uS4 (204 aa).

A disordered region spans residues 1 to 49; sequence MSKRKSAKYKLDRRMGENIWGRPNSPVNKRSYGPGQHGQRRKGKTSDFG. In terms of domain architecture, S4 RNA-binding spans 94–154; that stretch reads QRLDMVVYRA…NKAKEMALVI (61 aa).

Belongs to the universal ribosomal protein uS4 family. In terms of assembly, part of the 30S ribosomal subunit. Contacts protein S5. The interaction surface between S4 and S5 is involved in control of translational fidelity.

Its function is as follows. One of the primary rRNA binding proteins, it binds directly to 16S rRNA where it nucleates assembly of the body of the 30S subunit. With S5 and S12 plays an important role in translational accuracy. The chain is Small ribosomal subunit protein uS4 from Erythrobacter litoralis (strain HTCC2594).